The chain runs to 498 residues: Glycerol kinase (498 aa).

Thr14 provides a ligand contact to ADP. ATP contacts are provided by Thr14 and Thr15. Residue Thr14 participates in sn-glycerol 3-phosphate binding. An ADP-binding site is contributed by Arg18. Positions 84, 85, 136, and 246 each coordinate sn-glycerol 3-phosphate. Residues Arg84, Glu85, Tyr136, Asp246, and Gln247 each contribute to the glycerol site. ADP contacts are provided by Thr268 and Gly311. The ATP site is built by Thr268, Gly311, Gln315, and Gly412. Gly412 and Asn416 together coordinate ADP.

It belongs to the FGGY kinase family.

It carries out the reaction glycerol + ATP = sn-glycerol 3-phosphate + ADP + H(+). It participates in polyol metabolism; glycerol degradation via glycerol kinase pathway; sn-glycerol 3-phosphate from glycerol: step 1/1. Inhibited by fructose 1,6-bisphosphate (FBP). Functionally, key enzyme in the regulation of glycerol uptake and metabolism. Catalyzes the phosphorylation of glycerol to yield sn-glycerol 3-phosphate. This Leptospira biflexa serovar Patoc (strain Patoc 1 / Ames) protein is Glycerol kinase.